The chain runs to 304 residues: Recombination-associated protein RdgC (304 aa).

Belongs to the RdgC family.

Its subcellular location is the cytoplasm. It is found in the nucleoid. Its function is as follows. May be involved in recombination. The chain is Recombination-associated protein RdgC from Shewanella putrefaciens (strain CN-32 / ATCC BAA-453).